The sequence spans 33 residues: Alpha-amanitin proprotein (33 aa).

A propeptide spanning residues 1–10 (MSDINATRLP) is cleaved from the precursor. Ile11 bears the (3R,4R)-4,5-dihydroxyisoleucine; in form alpha-amanitin mark. Ile11 is subject to (3R,4S)-4-hydroxyisoleucine; in form gamma-amanitin. Residues 11–18 (IWGIGCNP) constitute a cross-link (cyclopeptide (Ile-Pro)). A cross-link (2'-cysteinyl-6'-hydroxytryptophan sulfoxide (Trp-Cys)) is located at residues 12-16 (WGIGC). At Pro18 the chain carries 4-hydroxyproline. Positions 19-33 (SVGDEVTALLTSGEA) are excised as a propeptide.

Belongs to the MSDIN fungal toxin family. Processed by the macrocyclase-peptidase enzyme POPB to yield a toxic cyclic decapeptide. POPB first removes 10 residues from the N-terminus. Conformational trapping of the remaining peptide forces the enzyme to release this intermediate rather than proceed to macrocyclization. The enzyme rebinds the remaining peptide in a different conformation and catalyzes macrocyclization of the N-terminal 8 residues.

Major toxin belonging to the bicyclic octapeptides amatoxins that acts by binding non-competitively to RNA polymerase II and greatly slowing the elongation of transcripts from target promoters. This is Alpha-amanitin proprotein from Amanita fuliginea (East Asian brown death cap).